Consider the following 281-residue polypeptide: MIGYGVCVGPGTLFERTCLPGIERVRAPGSPVFTMRNQRSLFSAYNAMFDQAAANSDITGLVMLHDDVELRKNPAEVAQSVFEDDSVGMLGSVGGSDTVSLAWWNERETRRGRVTDYDKVHDYGSDRYEVEAVDDVILCVNRWTIENIRFPEGHYRGFEGLGVILATLVRAAGKRVMVQDLQDVMHHNDGRGFNGLKDWRHNELRWHREFFDLSPAERLGNHLERLTIPAVPLRLAARRLAMRVGGRSHEVSDGETGDPVIDRLVGGWYRQCTRLRGRMLV.

Its pathway is antibiotic biosynthesis; streptomycin biosynthesis. Its function is as follows. May be involved in the formation of N-methyl-L-glucosamine. The sequence is that of Streptomycin biosynthesis protein StrF (strF) from Streptomyces griseus.